The chain runs to 419 residues: N-acylneuraminate cytidylyltransferase (419 aa).

This sequence belongs to the CMP-NeuNAc synthase family. In terms of assembly, monomer. May form aggregates. Requires Mg(2+) as cofactor. Mn(2+) serves as cofactor.

The protein resides in the cytoplasm. It carries out the reaction an N-acylneuraminate + CTP = a CMP-N-acyl-beta-neuraminate + diphosphate. Inhibited by the CTP analogs 5-mercuri-CTP and CTP-2',3'-dialdehyde. In terms of biological role, catalyzes the formation of CMP-N-acetylneuraminic acid (CMP-NeuNAc), which is essential for the formation of the capsule. This Escherichia coli O18:K1:H7 (strain RS218 / NMEC) protein is N-acylneuraminate cytidylyltransferase (neuA).